A 572-amino-acid chain; its full sequence is Proline--tRNA ligase (572 aa).

It belongs to the class-II aminoacyl-tRNA synthetase family. ProS type 1 subfamily. In terms of assembly, homodimer.

It is found in the cytoplasm. The enzyme catalyses tRNA(Pro) + L-proline + ATP = L-prolyl-tRNA(Pro) + AMP + diphosphate. Functionally, catalyzes the attachment of proline to tRNA(Pro) in a two-step reaction: proline is first activated by ATP to form Pro-AMP and then transferred to the acceptor end of tRNA(Pro). As ProRS can inadvertently accommodate and process non-cognate amino acids such as alanine and cysteine, to avoid such errors it has two additional distinct editing activities against alanine. One activity is designated as 'pretransfer' editing and involves the tRNA(Pro)-independent hydrolysis of activated Ala-AMP. The other activity is designated 'posttransfer' editing and involves deacylation of mischarged Ala-tRNA(Pro). The misacylated Cys-tRNA(Pro) is not edited by ProRS. This is Proline--tRNA ligase from Haemophilus influenzae (strain 86-028NP).